Reading from the N-terminus, the 339-residue chain is MSAPINGTVEKSYVPGAELWCQEDETAITEPYTYVNSMPGKDVRGRFIEAANHWLHVEPEPLAVICKIVAMLHNASLVIDDIEDNSQLRRGQPVAHKIYGLAQAINSANYVYFLALKEADQLKPYQREGYNSHEIILGALTSVSDFAAQDLLYSVFSDELVNLHRGQGLELVWRDSLRCPTEEQYIDMVNKKTGGLFRLAIKLLTACSSNPSTIDYVPLFNLFGVFFQIRDDLMNLDDNEYEKNKGFAEDLTEGKFSFPVIHGITAQKDNSVLINVLQKRPTTPPLKLHAIHHLRNNTGSFKYTETILNSLETRLRGEIDALGGNPGLLKLVDLLSVRK.

Isopentenyl diphosphate-binding residues include Lys-41, Arg-44, and His-73. Mg(2+) is bound by residues Asp-80 and Asp-84. A dimethylallyl diphosphate-binding site is contributed by Arg-89. Arg-90 lines the isopentenyl diphosphate pocket. Dimethylallyl diphosphate is bound by residues Lys-192, Thr-193, and Gln-228. Residue Asp-231 coordinates Mg(2+). The dimethylallyl diphosphate site is built by Asn-235, Lys-245, and Lys-255.

It belongs to the FPP/GGPP synthase family. Mg(2+) is required as a cofactor.

The enzyme catalyses isopentenyl diphosphate + dimethylallyl diphosphate = (2E)-geranyl diphosphate + diphosphate. The catalysed reaction is isopentenyl diphosphate + (2E)-geranyl diphosphate = (2E,6E)-farnesyl diphosphate + diphosphate. It carries out the reaction isopentenyl diphosphate + (2E,6E)-farnesyl diphosphate = (2E,6E,10E)-geranylgeranyl diphosphate + diphosphate. Its pathway is secondary metabolite biosynthesis. Its function is as follows. Geranylgeranyl pyrophosphate synthase; part of the gene cluster that mediates the biosynthesis of erinacines, cyathane-xylosides that show unique biological activities, including leishmanicidal activity, stimulating activity for nerve growth-factor synthesis, and agonistic activity toward the kappa opioid receptor. The geranylgeranyl diphosphate (GGPP) synthase eriE catalyzes the first step in erinacines biosynthesis via conversion of farnesyl pyrophosphate and isopentyl pyrophosphate into geranylgeranyl pyrophosphate (GGPP). GGPP is then substrate of the diterpene cyclase eriG for the production of cyatha-3,12-diene. The cytochrome P450 monooxygenase eriI then hydroxylates cyatha-3,12-diene at C-14 of the seven-membered ring to produce erinacol, which is further hydroxylated at C-15 by the cytochrome P450 monooxygenase eriC to yield cyathadiol. The cytochrome P450 monooxygenase eriA then catalyzes C-11 hydroxylation in the presence of the short chain dehydrogenase/reductase (SDR) eriH, which leads to the production of cyathatriol. The acetyltransferase eriL converts cyathatriol into 11-O-acetyl-cyathatriol. The SDR eriH catalyzes further oxidation of 11-O-acetyl-cyathatriol into 1-O-acetylcyathin A3. Finally, the glycosyl transferase eriJ tranfers xylose from UDP-xylose onto C-14 of 11-O-acetyl-cyathatriol to form eracine Q. EriJ is also able to convert 11-O-acetyl-cyathatriol to eracine Q2 by using UDP-D-glucose as cosubstrate, but at a lower rate. In the absence of eriL and eriJ, the SDR eriH is able to convert cyathatriol to cyathin A3; this is likely a switching mechanism in the biosynthesis of cyathins (C-14 ketogroup)and erinacines (C-14 glycosylated group). The roles of the SDR eriB, the polyprenyl transferase eriF and the dehydrogenase eriK have still to be identified. In Hericium erinaceus (Lion's mane mushroom), this protein is Geranylgeranyl pyrophosphate synthase AN1592.